The chain runs to 96 residues: Co-chaperonin GroES (96 aa).

The protein belongs to the GroES chaperonin family. In terms of assembly, heptamer of 7 subunits arranged in a ring. Interacts with the chaperonin GroEL.

It is found in the cytoplasm. Functionally, together with the chaperonin GroEL, plays an essential role in assisting protein folding. The GroEL-GroES system forms a nano-cage that allows encapsulation of the non-native substrate proteins and provides a physical environment optimized to promote and accelerate protein folding. GroES binds to the apical surface of the GroEL ring, thereby capping the opening of the GroEL channel. This Haemophilus influenzae (strain PittGG) protein is Co-chaperonin GroES.